The primary structure comprises 619 residues: Probable serine/threonine-protein kinase WNK8 (619 aa).

The segment covering 1–14 (MSGARRCGDRRSER) has biased composition (basic and acidic residues). The disordered stretch occupies residues 1-30 (MSGARRCGDRRSERSSVVGDNRNGYVETDP). Positions 35-291 (GRLSEVLGKG…AEELLLDPFL (257 aa)) constitute a Protein kinase domain. Residues 115 to 118 (TELF) and Lys-163 contribute to the ATP site. Asp-180 acts as the Proton acceptor in catalysis. Disordered stretches follow at residues 293–335 (PPQN…AKTT), 419–464 (YADD…PGPH), 508–555 (CSAS…SMVD), and 585–619 (GFRD…HYMF). The span at 419–428 (YADDDDDDDV) shows a compositional bias: acidic residues. The span at 439 to 448 (SSSPTSSQGS) shows a compositional bias: low complexity. The segment covering 602–619 (QHRRRSSSKVDHKHHYMF) has biased composition (basic residues).

This sequence belongs to the protein kinase superfamily. Ser/Thr protein kinase family. WNK subfamily.

The catalysed reaction is L-seryl-[protein] + ATP = O-phospho-L-seryl-[protein] + ADP + H(+). The enzyme catalyses L-threonyl-[protein] + ATP = O-phospho-L-threonyl-[protein] + ADP + H(+). In Oryza sativa subsp. japonica (Rice), this protein is Probable serine/threonine-protein kinase WNK8 (WNK8).